We begin with the raw amino-acid sequence, 450 residues long: Probable cysteine desulfurase, mitochondrial (450 aa).

The N-terminal 52 residues, 1–52 (MNRSILKFVKNGIISSSSRINNNGFINKNNNNRWFATLPQPNRGIAGEKQPI), are a transit peptide targeting the mitochondrion. Pyridoxal 5'-phosphate-binding positions include 120–121 (AT), asparagine 200, glutamine 228, and 248–250 (SGH). At lysine 251 the chain carries N6-(pyridoxal phosphate)lysine. Threonine 288 contributes to the pyridoxal 5'-phosphate binding site. Cysteine 374 functions as the Cysteine persulfide intermediate in the catalytic mechanism. Cysteine 374 is a [2Fe-2S] cluster binding site.

The protein belongs to the class-V pyridoxal-phosphate-dependent aminotransferase family. NifS/IscS subfamily. Pyridoxal 5'-phosphate is required as a cofactor.

It is found in the mitochondrion. Its subcellular location is the nucleus. The enzyme catalyses (sulfur carrier)-H + L-cysteine = (sulfur carrier)-SH + L-alanine. In terms of biological role, catalyzes the removal of elemental sulfur from cysteine to produce alanine. It supplies the inorganic sulfur for iron-sulfur (Fe-S) clusters. The polypeptide is Probable cysteine desulfurase, mitochondrial (nfs1) (Dictyostelium discoideum (Social amoeba)).